A 256-amino-acid chain; its full sequence is Undecaprenyl-diphosphatase (256 aa).

The next 7 membrane-spanning stretches (helical) occupy residues 8–28 (VLGI…GHLI), 41–61 (FVKS…VVLY), 75–95 (IIAA…LIKG), 96–116 (FLIG…IILI), 175–195 (AEFS…YDLI), 208–228 (ILII…KWFL), and 236–256 (LKIF…FFLF).

It belongs to the UppP family.

It is found in the cell inner membrane. The catalysed reaction is di-trans,octa-cis-undecaprenyl diphosphate + H2O = di-trans,octa-cis-undecaprenyl phosphate + phosphate + H(+). Functionally, catalyzes the dephosphorylation of undecaprenyl diphosphate (UPP). Confers resistance to bacitracin. This chain is Undecaprenyl-diphosphatase, found in Aquifex aeolicus (strain VF5).